The chain runs to 1706 residues: Cadherin-99C (1706 aa).

The first 28 residues, 1–28 (MAARNSLTPQQGLGFFGLLILLCSAVLG), serve as a signal peptide directing secretion. Over 29–1395 (KSQMCEVETG…AIDNEVFPFT (1367 aa)) the chain is Extracellular. 11 consecutive Cadherin domains span residues 68-142 (DPDT…APRF), 143-264 (MNTP…DPSF), 277-387 (INPE…PPVI), 388-500 (SSSQ…APKL), 519-604 (VTQV…PPRF), 605-704 (QKPI…NPEF), 707-807 (STLP…VPKF), 808-908 (SDAR…PPRF), 909-1005 (ITVP…RVDV), 1038-1148 (SDDS…APEF), and 1156-1270 (QQDT…ALSF). N105 and N188 each carry an N-linked (GlcNAc...) asparagine glycan. 4 N-linked (GlcNAc...) asparagine glycosylation sites follow: N442, N553, N620, and N753. N-linked (GlcNAc...) asparagine glycans are attached at residues N1053, N1088, and N1108. Residues N1311 and N1367 are each glycosylated (N-linked (GlcNAc...) asparagine). A helical transmembrane segment spans residues 1396 to 1416 (LIAISLVILILGTIGIIYICI). Residues 1417–1706 (SWSKYKNFKQ…RSEVETTTEL (290 aa)) are Cytoplasmic-facing.

In terms of assembly, interacts (via the cytoplasmic domain) with ck. Interacts (via the cytoplasmic domain) with Cul1 and Ubr3.

It localises to the apical cell membrane. The protein localises to the endosome membrane. The protein resides in the cell projection. It is found in the microvillus membrane. Cadherin that functions in epithelial morphogenesis and the intestine epithelial immune response. Essential for female fertility. Regulates the length and organization of apical microvilli in developing follicle cells and salivary glands. Function in the follicle cell is essential for egg development as the microvilli secrete eggshell material such as the vitelline membrane. Acts at least in part by regulating the recruitment of the myosin ck to the follicle cell microvilli. Also required to regulate cell rearrangements during salivary tube elongation, possibly by modulating cellular adhesion between the apical surface and apical extracellular matrix during epithelial tube elongation. May also function in cellular adhesion during the development of other tubular epithelia such as the trachea. Possibly functions as an apical membrane determinant which acts in apical membrane expansion during salivary and tracheal epithelial tube elongation. In salivary gland development, this function is independent of the other apical membrane determinants crb and sas. Essential downstream component of a hh-signaling pathway which regulates the Duox-dependent gut epithelial immune response to bacterial uracil; required for endosome formation in the enterocyte and activating norpA-dependent Ca2+ mobilization, which are essential steps in the Duox-dependent production of reactive oxygen species (ROS) in response to intestinal bacterial infection. The sequence is that of Cadherin-99C from Drosophila melanogaster (Fruit fly).